The chain runs to 536 residues: CTP synthase (536 aa).

The segment at 1 to 268 (MSFKSIFLTG…VDFLLSKFGF (268 aa)) is amidoligase domain. Ser14 provides a ligand contact to CTP. Residue Ser14 coordinates UTP. 15–20 (SLGKGL) provides a ligand contact to ATP. Tyr55 provides a ligand contact to L-glutamine. Residue Asp72 coordinates ATP. Residues Asp72 and Glu142 each coordinate Mg(2+). CTP-binding positions include 149–151 (DIE), 188–193 (KTKPTQ), and Lys224. UTP is bound by residues 188 to 193 (KTKPTQ) and Lys224. One can recognise a Glutamine amidotransferase type-1 domain in the interval 294-532 (RIGLVGKYLE…LSAALDYSLE (239 aa)). Gly353 serves as a coordination point for L-glutamine. The active-site Nucleophile; for glutamine hydrolysis is Cys380. Residues 381-384 (LGMQ), Glu404, and Arg460 contribute to the L-glutamine site. Active-site residues include His505 and Glu507.

It belongs to the CTP synthase family. Homotetramer.

The catalysed reaction is UTP + L-glutamine + ATP + H2O = CTP + L-glutamate + ADP + phosphate + 2 H(+). It catalyses the reaction L-glutamine + H2O = L-glutamate + NH4(+). It carries out the reaction UTP + NH4(+) + ATP = CTP + ADP + phosphate + 2 H(+). The protein operates within pyrimidine metabolism; CTP biosynthesis via de novo pathway; CTP from UDP: step 2/2. With respect to regulation, allosterically activated by GTP, when glutamine is the substrate; GTP has no effect on the reaction when ammonia is the substrate. The allosteric effector GTP functions by stabilizing the protein conformation that binds the tetrahedral intermediate(s) formed during glutamine hydrolysis. Inhibited by the product CTP, via allosteric rather than competitive inhibition. Its function is as follows. Catalyzes the ATP-dependent amination of UTP to CTP with either L-glutamine or ammonia as the source of nitrogen. Regulates intracellular CTP levels through interactions with the four ribonucleotide triphosphates. The chain is CTP synthase from Chlamydia muridarum (strain MoPn / Nigg).